The chain runs to 136 residues: Small ribosomal subunit protein uS19 (136 aa).

The protein belongs to the universal ribosomal protein uS19 family.

In terms of biological role, protein S19 forms a complex with S13 that binds strongly to the 16S ribosomal RNA. The polypeptide is Small ribosomal subunit protein uS19 (Methanothrix thermoacetophila (strain DSM 6194 / JCM 14653 / NBRC 101360 / PT) (Methanosaeta thermophila)).